The primary structure comprises 309 residues: Probable L,D-transpeptidase ErfK/SrfK (309 aa).

Positions 1 to 21 are cleaved as a signal peptide; that stretch reads MRRITPFFPFFVLLVSHFSLA. Residues 96 to 231 form the L,D-TPase catalytic domain; that stretch reads EGIVVNVAEM…VPVGTRVQII (136 aa). Residue His-191 is the Proton donor/acceptor of the active site. Cys-207 serves as the catalytic Nucleophile.

The protein belongs to the YkuD family.

The protein localises to the periplasm. It participates in cell wall biogenesis; peptidoglycan biosynthesis. This chain is Probable L,D-transpeptidase ErfK/SrfK (erfK), found in Salmonella typhimurium (strain LT2 / SGSC1412 / ATCC 700720).